The following is a 263-amino-acid chain: Small ribosomal subunit protein uS2 (263 aa).

It belongs to the universal ribosomal protein uS2 family.

This chain is Small ribosomal subunit protein uS2, found in Roseiflexus castenholzii (strain DSM 13941 / HLO8).